The following is a 200-amino-acid chain: MTEVALIDAGGANLGSVRYALQRLGVEPRLVCDARGLEGAARVILPGVGSAPEAMARLNNQGLIEPLLRLQVPLIGICLGMQLLFEHSEEGDVPCLGLLPGRVRRLTPAPSIRVPHMGWNRLLPLRASPLLAEVPEGANAYFVHSYAVPLTTAAVAACDHGGMFTAIVQQGVRCGAQFHPERSAETGARILRNFLEMDAA.

The Glutamine amidotransferase type-1 domain maps to 3 to 200 (EVALIDAGGA…LRNFLEMDAA (198 aa)). Catalysis depends on C78, which acts as the Nucleophile. Active-site residues include H179 and E181.

Heterodimer of HisH and HisF.

It localises to the cytoplasm. The enzyme catalyses 5-[(5-phospho-1-deoxy-D-ribulos-1-ylimino)methylamino]-1-(5-phospho-beta-D-ribosyl)imidazole-4-carboxamide + L-glutamine = D-erythro-1-(imidazol-4-yl)glycerol 3-phosphate + 5-amino-1-(5-phospho-beta-D-ribosyl)imidazole-4-carboxamide + L-glutamate + H(+). It catalyses the reaction L-glutamine + H2O = L-glutamate + NH4(+). It participates in amino-acid biosynthesis; L-histidine biosynthesis; L-histidine from 5-phospho-alpha-D-ribose 1-diphosphate: step 5/9. IGPS catalyzes the conversion of PRFAR and glutamine to IGP, AICAR and glutamate. The HisH subunit catalyzes the hydrolysis of glutamine to glutamate and ammonia as part of the synthesis of IGP and AICAR. The resulting ammonia molecule is channeled to the active site of HisF. The polypeptide is Imidazole glycerol phosphate synthase subunit HisH (Xylella fastidiosa (strain Temecula1 / ATCC 700964)).